Consider the following 466-residue polypeptide: Methylenetetrahydrofolate--tRNA-(uracil-5-)-methyltransferase TrmFO (466 aa).

12–17 serves as a coordination point for FAD; the sequence is GAGLAG.

It belongs to the MnmG family. TrmFO subfamily. It depends on FAD as a cofactor.

The protein resides in the cytoplasm. The enzyme catalyses uridine(54) in tRNA + (6R)-5,10-methylene-5,6,7,8-tetrahydrofolate + NADH + H(+) = 5-methyluridine(54) in tRNA + (6S)-5,6,7,8-tetrahydrofolate + NAD(+). It catalyses the reaction uridine(54) in tRNA + (6R)-5,10-methylene-5,6,7,8-tetrahydrofolate + NADPH + H(+) = 5-methyluridine(54) in tRNA + (6S)-5,6,7,8-tetrahydrofolate + NADP(+). In terms of biological role, catalyzes the folate-dependent formation of 5-methyl-uridine at position 54 (M-5-U54) in all tRNAs. In Synechococcus elongatus (strain ATCC 33912 / PCC 7942 / FACHB-805) (Anacystis nidulans R2), this protein is Methylenetetrahydrofolate--tRNA-(uracil-5-)-methyltransferase TrmFO.